A 392-amino-acid polypeptide reads, in one-letter code: DNA-directed RNA polymerase subunit Rpo1C (392 aa).

The protein belongs to the RNA polymerase beta' chain family. As to quaternary structure, part of the 13-subunit RNA polymerase complex.

It is found in the cytoplasm. The catalysed reaction is RNA(n) + a ribonucleoside 5'-triphosphate = RNA(n+1) + diphosphate. Functionally, DNA-dependent RNA polymerase (RNAP) catalyzes the transcription of DNA into RNA using the four ribonucleoside triphosphates as substrates. Forms part of the jaw domain. This Saccharolobus solfataricus (strain ATCC 35092 / DSM 1617 / JCM 11322 / P2) (Sulfolobus solfataricus) protein is DNA-directed RNA polymerase subunit Rpo1C.